The following is a 179-amino-acid chain: Probable chorismate pyruvate-lyase (179 aa).

Residues R82, L120, and E165 each coordinate substrate.

This sequence belongs to the UbiC family.

The protein resides in the cytoplasm. It carries out the reaction chorismate = 4-hydroxybenzoate + pyruvate. It participates in cofactor biosynthesis; ubiquinone biosynthesis. Its function is as follows. Removes the pyruvyl group from chorismate, with concomitant aromatization of the ring, to provide 4-hydroxybenzoate (4HB) for the ubiquinone pathway. The polypeptide is Probable chorismate pyruvate-lyase (Vibrio parahaemolyticus serotype O3:K6 (strain RIMD 2210633)).